The chain runs to 234 residues: Ubiquinone biosynthesis O-methyltransferase (234 aa).

The S-adenosyl-L-methionine site is built by R40, G59, D80, and M123.

This sequence belongs to the methyltransferase superfamily. UbiG/COQ3 family.

The catalysed reaction is a 3-demethylubiquinol + S-adenosyl-L-methionine = a ubiquinol + S-adenosyl-L-homocysteine + H(+). It catalyses the reaction a 3-(all-trans-polyprenyl)benzene-1,2-diol + S-adenosyl-L-methionine = a 2-methoxy-6-(all-trans-polyprenyl)phenol + S-adenosyl-L-homocysteine + H(+). Its pathway is cofactor biosynthesis; ubiquinone biosynthesis. In terms of biological role, O-methyltransferase that catalyzes the 2 O-methylation steps in the ubiquinone biosynthetic pathway. The sequence is that of Ubiquinone biosynthesis O-methyltransferase from Coxiella burnetii (strain CbuK_Q154) (Coxiella burnetii (strain Q154)).